A 288-amino-acid chain; its full sequence is Homoserine kinase (288 aa).

Residue 79 to 89 coordinates ATP; that stretch reads PLARGLGSSSS.

This sequence belongs to the GHMP kinase family. Homoserine kinase subfamily.

The protein resides in the cytoplasm. The catalysed reaction is L-homoserine + ATP = O-phospho-L-homoserine + ADP + H(+). It functions in the pathway amino-acid biosynthesis; L-threonine biosynthesis; L-threonine from L-aspartate: step 4/5. In terms of biological role, catalyzes the ATP-dependent phosphorylation of L-homoserine to L-homoserine phosphate. The chain is Homoserine kinase from Streptococcus sanguinis (strain SK36).